Consider the following 453-residue polypeptide: MKLSLVVLTLISVAAQALALVARENLPKPQNDPFYQPPDGWESKKVGTILRSRKVNINTLVKDNLKEAWQLLYRTTYRSDDEPTTTVTTIMVPHNAQNDSLVMFGDFEDAGAPQCAPSYTWRAGLTSDVSSIFNVGIAMLYLQEGYIVTMPDKEGNKGAFGSGHVEGRQSLDGIRATLAFDKIGLNKNARVVGHGYSGGGIQCGWTAALKKSYAPEINSVGWYTGGTPSNLTALVERINGGPFAGYVAGGLGGVISTYPDVKAYTDKVFTKQAQKDLEFPQKHCQFEVVLRFPFKNFYDKSFSTVGKRFLYEPVVQKALNELTMGTNPEFTPDTPVLMAHGISDEIAPYEAAHKTYESWCKNGADVEFLSFVNPVSAHGVTTVTSSVPGFLWNRDRLQGKPVQNGCREIKNHDAGINSNALGEDFESALGLLKGLLGDKIGPNDEYLKDALHK.

The first 19 residues, 1-19 (MKLSLVVLTLISVAAQALA), serve as a signal peptide directing secretion. A glycan (N-linked (GlcNAc...) asparagine) is linked at N98. Residues C115 and C284 are joined by a disulfide bond. The active-site Nucleophile is S197. An N-linked (GlcNAc...) asparagine glycan is attached at N230. Residues D344 and H378 contribute to the active site. C360 and C406 are joined by a disulfide.

Belongs to the AB hydrolase superfamily. Lipase family. Class Lip subfamily.

It localises to the secreted. It carries out the reaction a triacylglycerol + H2O = a diacylglycerol + a fatty acid + H(+). The catalysed reaction is a monoacylglycerol + H2O = glycerol + a fatty acid + H(+). It catalyses the reaction a diacylglycerol + H2O = a monoacylglycerol + a fatty acid + H(+). With respect to regulation, the activity is significantly increased in the presence of Triton X-100 and partially inhibited by PMSF but unaffected by univalent and divalent metal ions. Activity is significantly decreased in acetate buffer compared to that in citrate buffer at the same pH. Functionally, major secreted lipase involved in Dandruff and seborrheic dermatitis (D/SD) probably via lipase-mediated breakdown of sebaceous lipids and release of irritating free fatty acids. Has triacylglycerol lipase activity and is able to hydrolyze triolein, tristearin, trilinolein, tripalmitoylglycerol and trihexadecenoin. Hydrolyze diacylglycerols such as distearin, dilinolein, dipalmitoylglycerol and dipalmitolein. Shows high esterase activity against 4-nitrophenyl palmitate and 1-naphthyl palmitate but not 1-naphthyl acetate, suggesting that it specifically recognizes fatty acids. Mostly converts monoolein to di- and triolein, while free fatty acids are only produced in low amounts. This Malassezia globosa (strain ATCC MYA-4612 / CBS 7966) (Dandruff-associated fungus) protein is Secreted triacylglycerol lipase LIP2.